Reading from the N-terminus, the 415-residue chain is Protein fuzzy homolog (415 aa).

Belongs to the fuzzy family. Component of the CPLANE (ciliogenesis and planar polarity effectors) complex, composed of INTU, FUZ and WDPCP. Interacts with CPLANE1 and CPLANE2.

It localises to the cytoplasm. The protein resides in the cytoskeleton. The protein localises to the cilium basal body. Probable planar cell polarity effector involved in cilium biogenesis. Proposed to function as core component of the CPLANE (ciliogenesis and planar polarity effectors) complex involved in the recruitment of peripheral IFT-A proteins to basal bodies. May regulate protein and membrane transport to the cilium. May regulate the morphogenesis of hair follicles which depends on functional primary cilia. Binds phosphatidylinositol 3-phosphate with highest affinity, followed by phosphatidylinositol 4-phosphate and phosphatidylinositol 5-phosphate. In Rattus norvegicus (Rat), this protein is Protein fuzzy homolog (Fuz).